The primary structure comprises 418 residues: Serine hydroxymethyltransferase (418 aa).

(6S)-5,6,7,8-tetrahydrofolate is bound by residues Leu121 and 125–127 (GHL). Lys230 is subject to N6-(pyridoxal phosphate)lysine. 355 to 357 (SPF) provides a ligand contact to (6S)-5,6,7,8-tetrahydrofolate.

This sequence belongs to the SHMT family. In terms of assembly, homodimer. It depends on pyridoxal 5'-phosphate as a cofactor.

It localises to the cytoplasm. It carries out the reaction (6R)-5,10-methylene-5,6,7,8-tetrahydrofolate + glycine + H2O = (6S)-5,6,7,8-tetrahydrofolate + L-serine. Its pathway is one-carbon metabolism; tetrahydrofolate interconversion. The protein operates within amino-acid biosynthesis; glycine biosynthesis; glycine from L-serine: step 1/1. Its function is as follows. Catalyzes the reversible interconversion of serine and glycine with tetrahydrofolate (THF) serving as the one-carbon carrier. This reaction serves as the major source of one-carbon groups required for the biosynthesis of purines, thymidylate, methionine, and other important biomolecules. Also exhibits THF-independent aldolase activity toward beta-hydroxyamino acids, producing glycine and aldehydes, via a retro-aldol mechanism. The polypeptide is Serine hydroxymethyltransferase (Streptococcus pyogenes serotype M3 (strain ATCC BAA-595 / MGAS315)).